Here is a 1137-residue protein sequence, read N- to C-terminus: Dendrite extension defective protein 1 (1137 aa).

An N-terminal signal peptide occupies residues 1-41; that stretch reads MLAHTHRINKCLYGQNQMRNRHALLGALPPIFLLLLPLISC. Residues 43–1005 lie on the Extracellular side of the membrane; sequence KFDPERIAAR…HAEEQSPRLA (963 aa). Residues 163–302 form the NIDO 1 domain; sequence PFWNRNDLRN…GEWMFELSEL (140 aa). 2 N-linked (GlcNAc...) asparagine glycosylation sites follow: asparagine 240 and asparagine 416. Residues 409-450 enclose the EGF-like; calcium-binding domain; that stretch reads DVDECKTNSTICHKNAICTNTPGRYFCMCKEGFSGDGQNDCS. Cystine bridges form between cysteine 413–cysteine 426, cysteine 420–cysteine 435, and cysteine 437–cysteine 449. The region spanning 519-659 is the NIDO 2 domain; that stretch reads PFFGPIDLSR…GTWLYRIDKA (141 aa). Residue asparagine 571 is glycosylated (N-linked (GlcNAc...) asparagine). A compositionally biased stretch (polar residues) spans 738 to 749; that stretch reads IGNQQRQQTTKA. Disordered regions lie at residues 738–765, 795–856, 878–897, 906–933, and 978–998; these read IGNQ…HRPI, FRPN…PFEA, QTTK…EDLS, TEED…TKAH, and NSQP…GHAE. Asparagine 756 is a glycosylation site (N-linked (GlcNAc...) asparagine). A compositionally biased stretch (polar residues) spans 798–809; sequence NQRNGVQKSTQR. Over residues 819 to 833 the composition is skewed to basic and acidic residues; it reads PLKEEATTSVPREKT. Residues 906 to 915 are compositionally biased toward acidic residues; the sequence is TEEDEEEAEI. Residues 916–933 show a composition bias toward low complexity; it reads STETTTEMSSTTTTTKAH. A compositionally biased stretch (polar residues) spans 978–992; it reads NSQPPKQRNDNQPTV. Residues 1006–1026 traverse the membrane as a helical segment; it reads ILLPVMIILAWLVILVCIGAV. Residues 1027-1037 lie on the Cytoplasmic side of the membrane; the sequence is VCCKRRNSRES. The interval 1106-1125 is disordered; it reads ARLSTQERQSPPSFVNNGYT.

In terms of processing, may be proteolytically cleaved and secreted.

It is found in the membrane. Its subcellular location is the cell projection. It localises to the dendrite. The protein localises to the secreted. Along with dyf-7, enables neurite growth and maintenance by anchoring amphid dendritic tips during neuron cell body migration in embryonic and larval development. Promotes seam cell remodeling during the dauer phase. Plays a role in positively regulating locomotion during the dauer phase. The sequence is that of Dendrite extension defective protein 1 from Caenorhabditis elegans.